The chain runs to 313 residues: Olfactory receptor 1G1 (313 aa).

Residues 1 to 25 (MEGKNLTSISEFFLLGFSEQLEEQK) are Extracellular-facing. N5 carries an N-linked (GlcNAc...) asparagine glycan. A helical membrane pass occupies residues 26 to 49 (ALFGSFLFMYLVMVAGNLLIILVI). The Cytoplasmic segment spans residues 50–57 (ITDTQLHT). Residues 58 to 79 (PMYFFLANLSLADACFVSTTVP) form a helical membrane-spanning segment. Topologically, residues 80–100 (KMLANIQIQSQAISYSGCLLQ) are extracellular. Cysteines 97 and 189 form a disulfide. A helical transmembrane segment spans residues 101–120 (LYFFMLFVMLEAFLLAVMAY). Residues 121-140 (DHYVAICHPLHYILIMSPGL) lie on the Cytoplasmic side of the membrane. A helical transmembrane segment spans residues 141-158 (CVFLVSASWIMNALYSLL). Residues 159–196 (HTLLMNSLSFCANHEIPHFFCDIDPLLSLSCADPFTNE) lie on the Extracellular side of the membrane. Residues 197–219 (LVIFITGGLTGLICVLCLIISYT) form a helical membrane-spanning segment. Residues 220 to 236 (NVFSTILKIPSAQGKRK) are Cytoplasmic-facing. A helical transmembrane segment spans residues 237–259 (AFSTCSSHLSVVSLFXGTSFCVY). Residues 260 to 272 (FSPPSTRXAQKDT) are Extracellular-facing. The chain crosses the membrane as a helical span at residues 273–292 (VASVMYTVVTPMLNPFIYSL). The Cytoplasmic segment spans residues 293 to 313 (RNQEIKSSLRKLIWVRKIHSP).

The protein belongs to the G-protein coupled receptor 1 family.

It is found in the cell membrane. Its function is as follows. Odorant receptor. The polypeptide is Olfactory receptor 1G1 (OR1G1) (Pan troglodytes (Chimpanzee)).